Here is a 310-residue protein sequence, read N- to C-terminus: Vomeronasal type-1 receptor 90 (310 aa).

The Extracellular segment spans residues 1–20 (MRRISTLYGVVDKQAIFFSE). Residues 21–41 (VVIGISFNSILFLFHIFQFLL) traverse the membrane as a helical segment. Residues 42–46 (ERRLR) are Cytoplasmic-facing. A helical transmembrane segment spans residues 47 to 67 (ITDLIISLLALIHLGMLTVMG). Residues 68–93 (FRAVDIFASQNVWNDIKCKSLAHLHR) lie on the Extracellular side of the membrane. An intrachain disulfide couples Cys-85 to Cys-172. A helical membrane pass occupies residues 94-114 (LLRGLSLCATCLLSIFQAITL). The Cytoplasmic portion of the chain corresponds to 115–135 (SPRSSCLAKFKYKSTQHSLCS). A helical membrane pass occupies residues 136-156 (LLVLWAFYMSCGTHYSFTIVA). Residues 157–183 (DYNFSSRSLIFVTESCIILPMDYITRH) are Extracellular-facing. Asn-159 is a glycosylation site (N-linked (GlcNAc...) asparagine). Residues 184–204 (LFFILGIFRDVSFIGLMALSS) form a helical membrane-spanning segment. At 205–238 (GYMVALLCRHRKQAQHLHRTSLSPKASPEQRATR) the chain is on the cytoplasmic side. A helical transmembrane segment spans residues 239–259 (TILLLMSFFVLMYCLDCTISA). Topologically, residues 260–271 (SRLMHNGEPIHH) are extracellular. Residues 272–292 (SIQMMVSNSYATLSPLLLIVT) form a helical membrane-spanning segment. The Cytoplasmic portion of the chain corresponds to 293–310 (ENRISRFLKSLLGRTVDA).

The protein belongs to the G-protein coupled receptor 1 family. As to expression, expressed in 1-4% of neurons of the vomeronasal organ. Only one pheromone receptor gene may be expressed in a particular neuron. Not expressed in the main olfactory epithelium.

The protein localises to the cell membrane. Putative pheromone receptor implicated in the regulation of social as well as reproductive behavior. This Rattus norvegicus (Rat) protein is Vomeronasal type-1 receptor 90 (Vom1r90).